The sequence spans 481 residues: Proton-coupled amino acid transporter 2 (481 aa).

Topologically, residues 1-56 (MSVTKSAGSPQVAATVKLDLVSFPESAKKVQSQDPNPVNGSSSESSEKTKGITGFQ) are cytoplasmic. A disordered region spans residues 26-49 (SAKKVQSQDPNPVNGSSSESSEKT). Positions 29-40 (KVQSQDPNPVNG) are enriched in polar residues. A helical transmembrane segment spans residues 57-77 (TLVHLVKGNMGTGILGLPLAV). The Extracellular portion of the chain corresponds to 78 to 79 (KN). Residues 80 to 100 (AGILMGPLSLLVMGLIACHCM) traverse the membrane as a helical segment. Residues 101–146 (HILVRCAQRFCHRLNKPFMDYGDTVMHGLASSPNTWLQSHAHWGRH) are Cytoplasmic-facing. The helical transmembrane segment at 147–167 (AVSFFLIVTQLGFCCVYIVFL) threads the bilayer. Over 168-195 (ADNLKQVVEAVNSTTISCHKNETVVLTP) the chain is Extracellular. Residues 196–216 (TIDSRLYMLAFLPVLGLLVFI) form a helical membrane-spanning segment. Residues 217–220 (RNLR) lie on the Cytoplasmic side of the membrane. The chain crosses the membrane as a helical span at residues 221-241 (VLTIFSLLANVSMLVSLVIIG). Residues 242–262 (QYIIQGIPDPSQLPLVASWKT) lie on the Extracellular side of the membrane. The chain crosses the membrane as a helical span at residues 263–283 (YPLFFGTAIFSFESIGVVLPL). The Cytoplasmic portion of the chain corresponds to 284 to 295 (ENKMKDARRFPT). Residues 296-316 (ILSLGMSIITTLYIAIGALGY) form a helical membrane-spanning segment. The Extracellular segment spans residues 317-343 (LRFGDDIKASITLNLPNCWLYQSVKLL). The chain crosses the membrane as a helical span at residues 344–364 (YVVGILCTHALQFYVPAEIII). Residues 365–377 (PLAVSQVSKRWAL) lie on the Cytoplasmic side of the membrane. A helical membrane pass occupies residues 378–398 (PVDLSIRLALVCVTCMLAILI). Over 399–402 (PRLD) the chain is Extracellular. A helical membrane pass occupies residues 403-423 (LVLSLVGSVSSSALALIIPPL). The Cytoplasmic segment spans residues 424–444 (LEVTTYYGEGMSPLTITKDAL). The helical transmembrane segment at 445–465 (ISILGFMGFVVGTYQALDELI) threads the bilayer. Over 466-481 (RSGNSLPLSNSTMFIQ) the chain is Extracellular.

The protein belongs to the amino acid/polyamine transporter 2 family. In terms of tissue distribution, expressed in lung and spleen, and to a lower extent in brain, heart, kidney and skeletal muscle.

The protein localises to the cell membrane. It is found in the endoplasmic reticulum membrane. Its subcellular location is the recycling endosome membrane. It catalyses the reaction glycine(in) + H(+)(in) = glycine(out) + H(+)(out). The catalysed reaction is L-alanine(in) + H(+)(in) = L-alanine(out) + H(+)(out). It carries out the reaction D-alanine(in) + H(+)(in) = D-alanine(out) + H(+)(out). The enzyme catalyses L-proline(out) + H(+)(out) = L-proline(in) + H(+)(in). It catalyses the reaction D-proline(out) + H(+)(out) = D-proline(in) + H(+)(in). The catalysed reaction is 4-hydroxy-L-proline(in) + H(+)(in) = 4-hydroxy-L-proline(out) + H(+)(out). It carries out the reaction L-serine(in) + H(+)(in) = L-serine(out) + H(+)(out). The enzyme catalyses D-serine(out) + H(+)(out) = D-serine(in) + H(+)(in). It catalyses the reaction beta-alanine(in) + H(+)(in) = beta-alanine(out) + H(+)(out). The catalysed reaction is 4-aminobutanoate(in) + H(+)(in) = 4-aminobutanoate(out) + H(+)(out). It carries out the reaction sarcosine(in) + H(+)(in) = sarcosine(out) + H(+)(out). The enzyme catalyses N,N-dimethylglycine(in) + H(+)(in) = N,N-dimethylglycine(out) + H(+)(out). With respect to regulation, inhibited by L- and D-pipecolic acid, nipecotic acid, isonipecotic acid, L- and D-cycloserine, and L-2-azetidine-carboxylate. In terms of biological role, electrogenic proton/amino acid symporter with a high selectivity for the small side chains amino acids glycine, alanine and proline, where both L- and D-enantiomers are transported. Extension of the backbone length, as in beta-alanine and 4-aminobutanoate or methylation of the amino group, as in sarcosine and N,N-dimethylglycine, are also tolerated but decrease transport efficiency. A free carboxyl group is preferred. In Rattus norvegicus (Rat), this protein is Proton-coupled amino acid transporter 2.